We begin with the raw amino-acid sequence, 57 residues long: High-potential iron-sulfur protein (57 aa).

[4Fe-4S] cluster is bound by residues C21, C24, C33, and C46.

It belongs to the high-potential iron-sulfur protein (HiPIP) family. As to quaternary structure, homodimer.

Specific class of high-redox-potential 4Fe-4S ferredoxins. Functions in anaerobic electron transport in most purple and in some other photosynthetic bacteria and in at least one genus (Paracoccus) of halophilic, denitrifying bacteria. In Rhodopila globiformis (Rhodopseudomonas globiformis), this protein is High-potential iron-sulfur protein (hip).